Here is a 90-residue protein sequence, read N- to C-terminus: Phaiodotoxin (90 aa).

Positions 1–18 (MKTIPLLFLLFIYFECDG) are cleaved as a signal peptide. The LCN-type CS-alpha/beta domain occupies 19–90 (KFIRHKDESF…CFGALESKCA (72 aa)). 4 disulfides stabilise this stretch: Cys31/Cys56, Cys41/Cys68, Cys45/Cys70, and Cys81/Cys89.

Expressed by the venom gland.

The protein resides in the secreted. Functionally, sodium channel (Nav) specific neurotoxin. Causes impairment of movement and mild paralysis in crickets at a dose of 0.5 ug per animal. A dose of 0.8 ug per cricket causes clear flaccid paralysis. A dose of 1.0 ug per cricket causes death within 2 hours. Is not toxic to mice at a dose of 100 ug per 20 g mouse weight. The polypeptide is Phaiodotoxin (Anuroctonus phaiodactylus (Mafia scorpion)).